A 722-amino-acid polypeptide reads, in one-letter code: Polyribonucleotide nucleotidyltransferase (722 aa).

2 residues coordinate Mg(2+): Asp-486 and Asp-492. A KH domain is found at 553 to 612 (PKIVQLQIDIDKISLVIGSTGKTVKAITDEFEVKVQIEQNGKIILFGDDDFKMQKAKERI). Residues 622–717 (GEIYEGTVKK…KFGKIDLEIV (96 aa)) enclose the S1 motif domain.

It belongs to the polyribonucleotide nucleotidyltransferase family. Mg(2+) is required as a cofactor.

It is found in the cytoplasm. It carries out the reaction RNA(n+1) + phosphate = RNA(n) + a ribonucleoside 5'-diphosphate. Its function is as follows. Involved in mRNA degradation. Catalyzes the phosphorolysis of single-stranded polyribonucleotides processively in the 3'- to 5'-direction. The protein is Polyribonucleotide nucleotidyltransferase of Borreliella burgdorferi (strain ZS7) (Borrelia burgdorferi).